Consider the following 244-residue polypeptide: Diablo homolog, mitochondrial (244 aa).

A mitochondrion-targeting transit peptide spans 1-38 (MASLPRRLIWSFSYILRESFPIVSRRNCVSLLRASWRK). The IAP-binding signature appears at 50–54 (AIPVG). Over residues 207–218 (DEIKRTITEDKG) the composition is skewed to basic and acidic residues. A disordered region spans residues 207-244 (DEIKRTITEDKGNPPSGGSPRSSLSEEEEIPEAYLRED). A compositionally biased stretch (low complexity) spans 220–229 (PPSGGSPRSS).

It belongs to the Smac/DIABLO protein family. In terms of assembly, homodimer.

It is found in the mitochondrion. In terms of biological role, promotes apoptosis. Acts by opposing the inhibitory activity of inhibitor of apoptosis proteins (IAP). The chain is Diablo homolog, mitochondrial from Xenopus tropicalis (Western clawed frog).